Consider the following 143-residue polypeptide: Monothiol glutaredoxin-5, mitochondrial (143 aa).

The N-terminal 28 residues, 1 to 28 (MFGRISTRALLRPAFTHRIPSVSLSRFL), are a transit peptide targeting the mitochondrion. The 106-residue stretch at 33-138 (KQAIESAIES…KLLEDADALV (106 aa)) folds into the Glutaredoxin domain. K50 contacts glutathione. C58 is a [2Fe-2S] cluster binding site. Glutathione-binding positions include 90-94 (REGVK), I102, and 115-116 (CD).

This sequence belongs to the glutaredoxin family. Monothiol subfamily. In terms of assembly, homodimer.

It localises to the mitochondrion matrix. Its function is as follows. Monothiol glutaredoxin involved in mitochondrial iron-sulfur (Fe/S) cluster transfer. Receives iron-sulfur clusters from scaffold protein ISU1 and mediates their transfer to apoproteins, to the 4Fe/FS cluster biosynthesis machinery, or export from mitochondrion. This chain is Monothiol glutaredoxin-5, mitochondrial (GRX5), found in Lachancea kluyveri (Yeast).